The primary structure comprises 276 residues: MKKIYLCAISNIRSGACNEDCKFCTQSVKWGADINRYKQKDLKTIVNEAKLAKKNGATGFCLVTSGKGLDDKTLEYVCSAAKSVIKEVDISIIACNGTAGKDSLKELKKAGVKIYNHNLETSREYYPKICSTHTWDERFETCENIKSVGLQLCCGGIFGMGESNEDIESFIRSLKELKPNGIPLNFFIENEKLPLKATHNKDFALKTVKRFANEFKEAIIMLAGGREIVFGNEWTEALKVGANSIVIGDYLTTKGERPDRDLEILLNEGFEIANEC.

The 226-residue stretch at 1–226 (MKKIYLCAIS…EAIIMLAGGR (226 aa)) folds into the Radical SAM core domain. Residues cysteine 17, cysteine 21, and cysteine 24 each coordinate [4Fe-4S] cluster. The [2Fe-2S] cluster site is built by cysteine 61, cysteine 95, and cysteine 153.

Belongs to the radical SAM superfamily. Biotin synthase family. As to quaternary structure, homodimer. [4Fe-4S] cluster is required as a cofactor. It depends on [2Fe-2S] cluster as a cofactor.

It carries out the reaction (4R,5S)-dethiobiotin + (sulfur carrier)-SH + 2 reduced [2Fe-2S]-[ferredoxin] + 2 S-adenosyl-L-methionine = (sulfur carrier)-H + biotin + 2 5'-deoxyadenosine + 2 L-methionine + 2 oxidized [2Fe-2S]-[ferredoxin]. It participates in cofactor biosynthesis; biotin biosynthesis; biotin from 7,8-diaminononanoate: step 2/2. In terms of biological role, catalyzes the conversion of dethiobiotin (DTB) to biotin by the insertion of a sulfur atom into dethiobiotin via a radical-based mechanism. This is Biotin synthase from Nautilia profundicola (strain ATCC BAA-1463 / DSM 18972 / AmH).